The sequence spans 352 residues: 4-hydroxy-3-methylbut-2-en-1-yl diphosphate synthase (flavodoxin) (352 aa).

4 residues coordinate [4Fe-4S] cluster: C265, C268, C300, and E307.

Belongs to the IspG family. Requires [4Fe-4S] cluster as cofactor.

It catalyses the reaction (2E)-4-hydroxy-3-methylbut-2-enyl diphosphate + oxidized [flavodoxin] + H2O + 2 H(+) = 2-C-methyl-D-erythritol 2,4-cyclic diphosphate + reduced [flavodoxin]. Its pathway is isoprenoid biosynthesis; isopentenyl diphosphate biosynthesis via DXP pathway; isopentenyl diphosphate from 1-deoxy-D-xylulose 5-phosphate: step 5/6. In terms of biological role, converts 2C-methyl-D-erythritol 2,4-cyclodiphosphate (ME-2,4cPP) into 1-hydroxy-2-methyl-2-(E)-butenyl 4-diphosphate. The chain is 4-hydroxy-3-methylbut-2-en-1-yl diphosphate synthase (flavodoxin) from Persephonella marina (strain DSM 14350 / EX-H1).